A 440-amino-acid chain; its full sequence is Xylose isomerase (440 aa).

Catalysis depends on residues H100 and D103. E231, E267, H270, D295, D306, D308, and D338 together coordinate Mg(2+).

This sequence belongs to the xylose isomerase family. As to quaternary structure, homotetramer. Mg(2+) is required as a cofactor.

It localises to the cytoplasm. The enzyme catalyses alpha-D-xylose = alpha-D-xylulofuranose. This chain is Xylose isomerase, found in Burkholderia cenocepacia (strain HI2424).